The following is a 162-amino-acid chain: SsrA-binding protein (162 aa).

It belongs to the SmpB family.

Its subcellular location is the cytoplasm. Functionally, required for rescue of stalled ribosomes mediated by trans-translation. Binds to transfer-messenger RNA (tmRNA), required for stable association of tmRNA with ribosomes. tmRNA and SmpB together mimic tRNA shape, replacing the anticodon stem-loop with SmpB. tmRNA is encoded by the ssrA gene; the 2 termini fold to resemble tRNA(Ala) and it encodes a 'tag peptide', a short internal open reading frame. During trans-translation Ala-aminoacylated tmRNA acts like a tRNA, entering the A-site of stalled ribosomes, displacing the stalled mRNA. The ribosome then switches to translate the ORF on the tmRNA; the nascent peptide is terminated with the 'tag peptide' encoded by the tmRNA and targeted for degradation. The ribosome is freed to recommence translation, which seems to be the essential function of trans-translation. This Colwellia psychrerythraea (strain 34H / ATCC BAA-681) (Vibrio psychroerythus) protein is SsrA-binding protein.